A 179-amino-acid polypeptide reads, in one-letter code: Arginine repressor (179 aa).

Belongs to the ArgR family.

Its subcellular location is the cytoplasm. It functions in the pathway amino-acid biosynthesis; L-arginine biosynthesis [regulation]. In terms of biological role, regulates arginine biosynthesis genes. This is Arginine repressor from Renibacterium salmoninarum (strain ATCC 33209 / DSM 20767 / JCM 11484 / NBRC 15589 / NCIMB 2235).